The chain runs to 513 residues: Serine/threonine-protein kinase ppk8 (513 aa).

Positions 98–114 (LSSTLTSMSEESSSTES) are enriched in low complexity. Residues 98-120 (LSSTLTSMSEESSSTESKFATLN) form a disordered region. Positions 241-505 (GKLNNVIGEG…ISGARSTTWM (265 aa)) constitute a Protein kinase domain. ATP contacts are provided by residues 247 to 255 (IGEGASSFI) and lysine 270. The active-site Proton acceptor is aspartate 364.

This sequence belongs to the protein kinase superfamily. Ser/Thr protein kinase family.

The protein localises to the cytoplasm. It localises to the nucleus. The catalysed reaction is L-seryl-[protein] + ATP = O-phospho-L-seryl-[protein] + ADP + H(+). It catalyses the reaction L-threonyl-[protein] + ATP = O-phospho-L-threonyl-[protein] + ADP + H(+). In Schizosaccharomyces pombe (strain 972 / ATCC 24843) (Fission yeast), this protein is Serine/threonine-protein kinase ppk8 (ppk8).